The chain runs to 397 residues: Tyrosine aminotransferase (397 aa).

Residues glycine 34, tyrosine 66, tryptophan 131, and asparagine 184 each coordinate substrate. The residue at position 247 (lysine 247) is an N6-(pyridoxal phosphate)lysine. Position 375 (arginine 375) interacts with substrate.

This sequence belongs to the class-I pyridoxal-phosphate-dependent aminotransferase family. As to quaternary structure, homodimer. Pyridoxal 5'-phosphate serves as cofactor.

The enzyme catalyses L-tyrosine + 2-oxoglutarate = 3-(4-hydroxyphenyl)pyruvate + L-glutamate. The catalysed reaction is 4-methylsulfanyl-2-oxobutanoate + L-tyrosine = 3-(4-hydroxyphenyl)pyruvate + L-methionine. It catalyses the reaction an aromatic L-alpha-amino acid + 2-oxoglutarate = an aromatic oxo-acid + L-glutamate. It carries out the reaction L-aspartate + 2-oxoglutarate = oxaloacetate + L-glutamate. It participates in amino-acid biosynthesis; L-methionine biosynthesis via salvage pathway; L-methionine from S-methyl-5-thio-alpha-D-ribose 1-phosphate: step 6/6. Its activity is regulated as follows. Inhibited by malate and nitrotyrosine by approximately 20% at the higher concentration. At 100 uM, canaline and carboxymethoxylamine inhibit aminotransferase activity by 35 and 70%, respectively. Addition of 1.0 mM carboxymethoxylamine lead to a complete inhibition of the aminotransferase activity. Its function is as follows. catalyzes the formation of methionine from 2-keto-4-methylthiobutyrate (KMTB) primarily using aromatic amino acids (tyrosine, phenylalanine and tryptophan) or glutamate as the amino donors. Histidine, leucine, asparagine, or arginine are also functional amino donors but to a lesser extent. Can also use alpha-ketoglutarate, oxaloacetate and pyruvate as the amino acceptors. This Klebsiella pneumoniae protein is Tyrosine aminotransferase (tyrB).